A 448-amino-acid polypeptide reads, in one-letter code: N-succinylarginine dihydrolase (448 aa).

Substrate contacts are provided by residues 19-28 (GGLSYGNVAS), N110, and 137-138 (HR). Residue E174 is part of the active site. R214 contacts substrate. The active site involves H250. Positions 252 and 365 each coordinate substrate. The active-site Nucleophile is C371.

This sequence belongs to the succinylarginine dihydrolase family. Homodimer.

It catalyses the reaction N(2)-succinyl-L-arginine + 2 H2O + 2 H(+) = N(2)-succinyl-L-ornithine + 2 NH4(+) + CO2. It functions in the pathway amino-acid degradation; L-arginine degradation via AST pathway; L-glutamate and succinate from L-arginine: step 2/5. Catalyzes the hydrolysis of N(2)-succinylarginine into N(2)-succinylornithine, ammonia and CO(2). The sequence is that of N-succinylarginine dihydrolase from Pseudomonas aeruginosa (strain LESB58).